The chain runs to 621 residues: MSNKESTSYNLLVHLADLPTQSGIYQFFDNEDTLLYVGKAKNLKNRIKSYLSIENKHIVPKNNLSPRIALMVSQITRIHTLLTNNEQDALILENSLIKSLKPKYNILLRDDKTYPYIYIDKSLPYPRFELTRQVLKSNQIQYFGPFVSGARELLDSLYDNLPLVQKKSCVKGKKACIFHQIHKCPAPCENKVSIQTYAQTIAQGIALIEDKKALLKILESKMHTLSHNLQFEEAAIMRDRIQKITQMKNQSIIDMMSGDYDVFVLQEQDCGKNSQDSHKKSHTALHTHILMMLFIRNGRIISSDFILLHDDIQSHNLPQLYTQALLNHYKTQIPLLPQEILIPPFDFPDLLHLQQLLREQTRSSLKIVQPQRGAKKDLLQLAHKNALEIRRLHTQQNNTFSTLVSIKELCVLSQIPYSIEVFDTSHHSGTHNVGGMIVYENDDFIRSKYRRYELHTSDEYSQMHEMLLRRAQSFDSNPPPALWLLDGGRAQINLALDILKSVGANVEVLAIAKMKHNAKAYRAKGNAFDILRSKNAEFKLKPNDKRLQFLQKLRDEVHRYAITYHRYKKQKDIQKAQMMGKNYTQAQIKKLLDYFGSFESLKTASQEQINSVLSRRNRSDT.

Residues 20–106 enclose the GIY-YIG domain; the sequence is TQSGIYQFFD…IKSLKPKYNI (87 aa). In terms of domain architecture, UVR spans 212–247; the sequence is KALLKILESKMHTLSHNLQFEEAAIMRDRIQKITQM.

The protein belongs to the UvrC family. As to quaternary structure, interacts with UvrB in an incision complex.

The protein resides in the cytoplasm. In terms of biological role, the UvrABC repair system catalyzes the recognition and processing of DNA lesions. UvrC both incises the 5' and 3' sides of the lesion. The N-terminal half is responsible for the 3' incision and the C-terminal half is responsible for the 5' incision. The chain is UvrABC system protein C from Helicobacter hepaticus (strain ATCC 51449 / 3B1).